The primary structure comprises 339 residues: MO25-like protein 3 (339 aa).

Belongs to the Mo25 family.

The sequence is that of MO25-like protein 3 (mop-25.3) from Caenorhabditis elegans.